The sequence spans 552 residues: HTH-type transcriptional regulator SgrR (552 aa).

The HTH marR-type domain occupies M1–R116. The H-T-H motif DNA-binding region spans L26 to D49. The interval E163–W492 is solute-binding.

Functionally, activates the small RNA gene sgrS under glucose-phosphate stress conditions as well as yfdZ. Represses its own transcription under both stress and non-stress conditions. Might act as a sensor of the intracellular accumulation of phosphoglucose by binding these molecules in its C-terminal solute-binding domain. The polypeptide is HTH-type transcriptional regulator SgrR (Shigella dysenteriae serotype 1 (strain Sd197)).